Consider the following 79-residue polypeptide: Small ribosomal subunit protein bS18 (79 aa).

It belongs to the bacterial ribosomal protein bS18 family. In terms of assembly, part of the 30S ribosomal subunit. Forms a tight heterodimer with protein bS6.

Its function is as follows. Binds as a heterodimer with protein bS6 to the central domain of the 16S rRNA, where it helps stabilize the platform of the 30S subunit. The sequence is that of Small ribosomal subunit protein bS18 from Onion yellows phytoplasma (strain OY-M).